Reading from the N-terminus, the 138-residue chain is MKNTFLYFRWEDLHGEIGVDSFNLLRASYSNLSEQQLVELIKELISIEREDIAAKFDIHLSENAPVFDERQHVVYKGVAGDMNYKDMLLSLVTALDLTNTLDHVQNILSLAKCLRSFDREIFARFAKDIAEEVYYSLK.

This is SPbeta prophage-derived uncharacterized protein YopJ (yopJ) from Bacillus subtilis (strain 168).